The chain runs to 442 residues: Citrate transporter CitP (442 aa).

Transmembrane regions (helical) follow at residues 27–47 (ISGI…IAIS), 59–79 (IFAL…LPIF), 83–103 (LGGG…TNVI), 114–134 (FING…SSLF), 151–171 (VAFI…VIIG), 177–197 (AILY…IVPL), 209–229 (SAGI…LAII), 267–287 (YVQL…GTML), 293–313 (GINA…FGLL), 321–341 (VIMF…AGVG), 349–369 (VLLA…IVAI), 387–409 (AAIT…VLAA), and 421–441 (MGNR…VTFM).

The protein belongs to the 2-hydroxycarboxylate transporter (2-HCT) (TC 2.A.24) family.

Its subcellular location is the cell membrane. It carries out the reaction (R)-lactate(in) + citrate(out) = (R)-lactate(out) + citrate(in). The catalysed reaction is (S)-lactate(in) + citrate(out) = (S)-lactate(out) + citrate(in). It catalyses the reaction citrate(in) + H(+)(in) = citrate(out) + H(+)(out). The transport of citrate is unaffected by the presence of citrate in the growth media. Secondary transporter involved in citrate metabolism. During cometabolism of citrate and glucose, catalyzes the uptake of divalent citrate into the cell coupled to the exit of monovalent lactate, the end product of glycolysis in L.lactis. The citrate/lactate exchange is electrogenic and results in the generation of a membrane potential. Plays an important role in resistance against lactate toxicity at low pH. In the absence of glucose, i.e. when no lactate is produced, CitP catalyzes the uptake of citrate in exchange with the citrate metabolism intermediates pyruvate and alpha-acetolactate, and the end product acetate. In the absence of glucose, CitP can also catalyze the proton-dependent transport of citrate. In vitro, shows a broad substrate specificity. Can transport a wide variety of mono- and dicarboxylates of the form X-CR(2)-COO(-), where X represents OH (2-hydroxy acid), O (2-keto acid), or H (acid) and R groups differ in size, hydrophobicity and composition. Many of the substrates are intermediates or products of amino acid metabolism, suggesting that CitP may have a broader physiological function than its role in citrate metabolism. In Lactococcus lactis subsp. lactis (Streptococcus lactis), this protein is Citrate transporter CitP.